Here is a 732-residue protein sequence, read N- to C-terminus: Kell blood group glycoprotein (732 aa).

The interval 1-37 (MEGGDQSEEEPRERSQAGGMGTLWSQESTPEERLPVE) is disordered. Topologically, residues 1–47 (MEGGDQSEEEPRERSQAGGMGTLWSQESTPEERLPVEGSRPWAVARR) are cytoplasmic. Serine 7 is modified (phosphoserine). The chain crosses the membrane as a helical; Signal-anchor for type II membrane protein span at residues 48 to 67 (VLTAILILGLLLCFSVLLFY). At 68-732 (NFQNCGPRPC…LNPSSRCQLW (665 aa)) the chain is on the extracellular side. One can recognise a Peptidase M13 domain in the interval 76 to 732 (PCETSVCLDL…LNPSSRCQLW (657 aa)). The cysteines at positions 77 and 82 are disulfide-linked. Asparagine 94 and asparagine 115 each carry an N-linked (GlcNAc...) asparagine glycan. 4 cysteine pairs are disulfide-bonded: cysteine 100–cysteine 717, cysteine 108–cysteine 682, cysteine 155–cysteine 410, and cysteine 610–cysteine 729. N-linked (GlcNAc...) asparagine; in KEL2 antigen glycosylation is present at asparagine 191. The N-linked (GlcNAc...) asparagine glycan is linked to asparagine 345. Histidine 581 is a binding site for Zn(2+). The active site involves glutamate 582. Residue histidine 585 coordinates Zn(2+). Asparagine 627 carries N-linked (GlcNAc...) asparagine glycosylation. Glutamate 634 provides a ligand contact to Zn(2+). Residue aspartate 638 is the Proton donor of the active site. Residues 684–703 (KPSPQDSHDTHSPPHLRVHG) form a disordered region.

It belongs to the peptidase M13 family. In terms of assembly, heterodimer with XK; disulfide-linked. It depends on Zn(2+) as a cofactor. Post-translationally, N-glycosylated. Expressed at high levels in erythrocytes and testis (in Sertoli cells), and, at lower levels, in skeletal muscle, tonsils (in follicular dendritic cells), lymph node, spleen and appendix (at protein level). Also expressed in many adult and fetal nonerythroid tissues, including brain, spleen, lymph nodes and bone marrow.

It is found in the cell membrane. Functionally, zinc endopeptidase with endothelin-3-converting enzyme activity. Cleaves EDN1, EDN2 and EDN3, with a marked preference for EDN3. The chain is Kell blood group glycoprotein (KEL) from Homo sapiens (Human).